Reading from the N-terminus, the 124-residue chain is Small ribosomal subunit protein uS12cz/uS12cy (124 aa).

This sequence belongs to the universal ribosomal protein uS12 family. In terms of assembly, part of the 30S ribosomal subunit.

Its subcellular location is the plastid. Its function is as follows. With S4 and S5 plays an important role in translational accuracy. Located at the interface of the 30S and 50S subunits. The sequence is that of Small ribosomal subunit protein uS12cz/uS12cy (rps12-A) from Epifagus virginiana (Beechdrops).